We begin with the raw amino-acid sequence, 1207 residues long: DNA-directed RNA polymerase subunit beta' (1207 aa).

The Zn(2+) site is built by cysteine 60, cysteine 62, cysteine 75, and cysteine 78. 3 residues coordinate Mg(2+): aspartate 450, aspartate 452, and aspartate 454. Zn(2+) contacts are provided by cysteine 818, cysteine 892, cysteine 899, and cysteine 902.

It belongs to the RNA polymerase beta' chain family. In terms of assembly, the RNAP catalytic core consists of 2 alpha, 1 beta, 1 beta' and 1 omega subunit. When a sigma factor is associated with the core the holoenzyme is formed, which can initiate transcription. Mg(2+) serves as cofactor. The cofactor is Zn(2+).

It carries out the reaction RNA(n) + a ribonucleoside 5'-triphosphate = RNA(n+1) + diphosphate. DNA-dependent RNA polymerase catalyzes the transcription of DNA into RNA using the four ribonucleoside triphosphates as substrates. In Lactococcus lactis subsp. cremoris (strain SK11), this protein is DNA-directed RNA polymerase subunit beta'.